A 368-amino-acid polypeptide reads, in one-letter code: Phenylalanine--tRNA ligase alpha subunit (368 aa).

Glu-268 lines the Mg(2+) pocket.

It belongs to the class-II aminoacyl-tRNA synthetase family. Phe-tRNA synthetase alpha subunit type 1 subfamily. Tetramer of two alpha and two beta subunits. Mg(2+) serves as cofactor.

It is found in the cytoplasm. The catalysed reaction is tRNA(Phe) + L-phenylalanine + ATP = L-phenylalanyl-tRNA(Phe) + AMP + diphosphate + H(+). The sequence is that of Phenylalanine--tRNA ligase alpha subunit from Nitrobacter hamburgensis (strain DSM 10229 / NCIMB 13809 / X14).